Here is a 756-residue protein sequence, read N- to C-terminus: 1-phosphatidylinositol 4,5-bisphosphate phosphodiesterase delta-1 (756 aa).

The 110-residue stretch at 21–130 (ALLKGSQLLK…WVLGLHKIIH (110 aa)) folds into the PH domain. Residues 30 to 57 (KVKSSSWRRERFYKLQEDCKTIWQESRK) form a substrate binding region. EF-hand domains lie at 140 to 175 (KLQH…LNIQ) and 176 to 211 (VDDS…LTQR). Ca(2+)-binding residues include Asp153, Asn155, Asp157, Lys159, Glu164, Asp189, Ser191, Thr193, Ser195, and Glu200. An O-linked (GlcNAc) serine glycan is attached at Ser191. O-linked (GlcNAc) threonine glycosylation occurs at Thr193. Positions 296 to 440 (QDMGQPLSHY…LKGKILLKGK (145 aa)) constitute a PI-PLC X-box domain. His311 is an active-site residue. Ca(2+) contacts are provided by Asn312, Glu341, and Asp343. His356 is a catalytic residue. Glu390 contributes to the Ca(2+) binding site. Lys438 and Lys440 together coordinate substrate. The residue at position 457 (Thr457) is a Phosphothreonine. At Ser460 the chain carries Phosphoserine. The PI-PLC Y-box domain maps to 492–609 (LSDMVIYCKS…GYVLKPAFLR (118 aa)). 2 residues coordinate substrate: Ser522 and Arg549. Residues 611–737 (PNGTFNPRAL…QGYRHVHLMS (127 aa)) enclose the C2 domain. Ca(2+)-binding residues include Ile651, Asp653, Asn677, Asp706, Tyr707, and Asp708.

Interacts with TGM2. Ca(2+) serves as cofactor. Strongly expressed in lung, liver and heart. Also expressed at least in pancreas, kidney, skeletal muscle, placenta and brain.

The catalysed reaction is a 1,2-diacyl-sn-glycero-3-phospho-(1D-myo-inositol-4,5-bisphosphate) + H2O = 1D-myo-inositol 1,4,5-trisphosphate + a 1,2-diacyl-sn-glycerol + H(+). It catalyses the reaction a 1,2-diacyl-sn-glycero-3-phospho-(1D-myo-inositol) + H2O = 1D-myo-inositol 1-phosphate + a 1,2-diacyl-sn-glycerol + H(+). Its function is as follows. The production of the second messenger molecules diacylglycerol (DAG) and inositol 1,4,5-trisphosphate (IP3) is mediated by activated phosphatidylinositol-specific phospholipase C enzymes. Essential for trophoblast and placental development. Binds phosphatidylinositol 4,5-bisphosphate. This is 1-phosphatidylinositol 4,5-bisphosphate phosphodiesterase delta-1 from Homo sapiens (Human).